We begin with the raw amino-acid sequence, 788 residues long: Phosphoribosylformylglycinamidine synthase subunit PurL (788 aa).

His50 is a catalytic residue. Residues Tyr53 and Lys92 each coordinate ATP. Glu94 contacts Mg(2+). Substrate contacts are provided by residues 95-98 and Arg117; that span reads SHNH. The active-site Proton acceptor is the His96. Asp118 serves as a coordination point for Mg(2+). Gln241 serves as a coordination point for substrate. Asp269 serves as a coordination point for Mg(2+). 313 to 315 is a substrate binding site; that stretch reads ESQ. Residues Asp524 and Gly561 each coordinate ATP. Asn562 is a binding site for Mg(2+). Residue Ser564 participates in substrate binding.

This sequence belongs to the FGAMS family. Monomer. Part of the FGAM synthase complex composed of 1 PurL, 1 PurQ and 2 PurS subunits.

The protein resides in the cytoplasm. It carries out the reaction N(2)-formyl-N(1)-(5-phospho-beta-D-ribosyl)glycinamide + L-glutamine + ATP + H2O = 2-formamido-N(1)-(5-O-phospho-beta-D-ribosyl)acetamidine + L-glutamate + ADP + phosphate + H(+). It functions in the pathway purine metabolism; IMP biosynthesis via de novo pathway; 5-amino-1-(5-phospho-D-ribosyl)imidazole from N(2)-formyl-N(1)-(5-phospho-D-ribosyl)glycinamide: step 1/2. In terms of biological role, part of the phosphoribosylformylglycinamidine synthase complex involved in the purines biosynthetic pathway. Catalyzes the ATP-dependent conversion of formylglycinamide ribonucleotide (FGAR) and glutamine to yield formylglycinamidine ribonucleotide (FGAM) and glutamate. The FGAM synthase complex is composed of three subunits. PurQ produces an ammonia molecule by converting glutamine to glutamate. PurL transfers the ammonia molecule to FGAR to form FGAM in an ATP-dependent manner. PurS interacts with PurQ and PurL and is thought to assist in the transfer of the ammonia molecule from PurQ to PurL. This chain is Phosphoribosylformylglycinamidine synthase subunit PurL, found in Nostoc punctiforme (strain ATCC 29133 / PCC 73102).